The following is a 307-amino-acid chain: Elongation factor Ts (307 aa).

Positions 80–83 are involved in Mg(2+) ion dislocation from EF-Tu; it reads TDFV.

It belongs to the EF-Ts family.

Its subcellular location is the cytoplasm. Associates with the EF-Tu.GDP complex and induces the exchange of GDP to GTP. It remains bound to the aminoacyl-tRNA.EF-Tu.GTP complex up to the GTP hydrolysis stage on the ribosome. In Zymomonas mobilis subsp. mobilis (strain ATCC 31821 / ZM4 / CP4), this protein is Elongation factor Ts (tsf).